The sequence spans 169 residues: 3-hydroxyacyl-[acyl-carrier-protein] dehydratase FabZ (169 aa).

His-66 is an active-site residue.

Belongs to the thioester dehydratase family. FabZ subfamily.

It localises to the cytoplasm. The catalysed reaction is a (3R)-hydroxyacyl-[ACP] = a (2E)-enoyl-[ACP] + H2O. Its function is as follows. Involved in unsaturated fatty acids biosynthesis. Catalyzes the dehydration of short chain beta-hydroxyacyl-ACPs and long chain saturated and unsaturated beta-hydroxyacyl-ACPs. The polypeptide is 3-hydroxyacyl-[acyl-carrier-protein] dehydratase FabZ (Helicobacter hepaticus (strain ATCC 51449 / 3B1)).